Here is a 58-residue protein sequence, read N- to C-terminus: Potassium channel toxin alpha-KTx 16.6 (58 aa).

A signal peptide spans 1–22 (MKILSVLLIALIICSINICSEA). Cystine bridges form between cysteine 29–cysteine 50, cysteine 35–cysteine 55, and cysteine 39–cysteine 57.

It belongs to the short scorpion toxin superfamily. Potassium channel inhibitor family. Alpha-KTx 16 subfamily. As to expression, expressed by the venom gland.

The protein localises to the secreted. Inhibits potassium channel. In Buthus israelis (Israeli scorpion), this protein is Potassium channel toxin alpha-KTx 16.6.